The chain runs to 235 residues: Large ribosomal subunit protein uL1 (235 aa).

This sequence belongs to the universal ribosomal protein uL1 family. As to quaternary structure, part of the 50S ribosomal subunit.

In terms of biological role, binds directly to 23S rRNA. The L1 stalk is quite mobile in the ribosome, and is involved in E site tRNA release. Functionally, protein L1 is also a translational repressor protein, it controls the translation of the L11 operon by binding to its mRNA. The protein is Large ribosomal subunit protein uL1 of Desulfotalea psychrophila (strain LSv54 / DSM 12343).